We begin with the raw amino-acid sequence, 278 residues long: Putative protein-disulfide oxidoreductase RF_0032 (278 aa).

The N-terminal stretch at 1–18 is a signal peptide; that stretch reads MRSIFIVPIFLLFLSSCS. A disordered region spans residues 62-84; the sequence is VPANDNNQTDEVSTPPSQEQKNP. Polar residues predominate over residues 65–81; that stretch reads NDNNQTDEVSTPPSQEQ. The Thioredoxin domain maps to 77–266; sequence PSQEQKNPEI…ISTAVDKALE (190 aa). The cysteines at positions 119 and 122 are disulfide-linked.

Belongs to the thioredoxin family. DsbA subfamily.

The protein localises to the periplasm. In terms of biological role, may be required for disulfide bond formation in some proteins. The chain is Putative protein-disulfide oxidoreductase RF_0032 from Rickettsia felis (strain ATCC VR-1525 / URRWXCal2) (Rickettsia azadi).